We begin with the raw amino-acid sequence, 199 residues long: Peptidyl-tRNA hydrolase (199 aa).

Tyrosine 18 contacts tRNA. The active-site Proton acceptor is histidine 23. The tRNA site is built by tyrosine 72, asparagine 74, and asparagine 120.

The protein belongs to the PTH family. As to quaternary structure, monomer.

Its subcellular location is the cytoplasm. The enzyme catalyses an N-acyl-L-alpha-aminoacyl-tRNA + H2O = an N-acyl-L-amino acid + a tRNA + H(+). Hydrolyzes ribosome-free peptidyl-tRNAs (with 1 or more amino acids incorporated), which drop off the ribosome during protein synthesis, or as a result of ribosome stalling. Functionally, catalyzes the release of premature peptidyl moieties from peptidyl-tRNA molecules trapped in stalled 50S ribosomal subunits, and thus maintains levels of free tRNAs and 50S ribosomes. This is Peptidyl-tRNA hydrolase from Bifidobacterium animalis subsp. lactis (strain AD011).